We begin with the raw amino-acid sequence, 323 residues long: UDP-galactose/UDP-glucose transporter 7 (323 aa).

The Cytoplasmic portion of the chain corresponds to 1 to 10; the sequence is MEVQAEMEPT. Residues 11-31 traverse the membrane as a helical segment; it reads SSISLVAAVSYGIASMAMVFI. Over 32–35 the chain is Lumenal; the sequence is NKAV. A helical membrane pass occupies residues 36–58; the sequence is IMQYPHSMTVLTLQQLATSLLIH. At 59 to 78 the chain is on the cytoplasmic side; the sequence is FGRRMGYTRAKGIDMATAKK. The helical transmembrane segment at 79–97 threads the bilayer; it reads LLPVSIFYNANVAFALASL. Over 98-101 the chain is Lumenal; sequence KGVN. Residues 102-124 traverse the membrane as a helical segment; that stretch reads IPMYIAIKRLTPLAVLISGVLFG. Residues 125–132 are Cytoplasmic-facing; sequence KGKPTTQV. The helical transmembrane segment at 133 to 153 threads the bilayer; that stretch reads ALSVLLTAAGCVIAALGDFSF. Position 154 (D154) is a topological domain, lumenal. Residues 155–175 form a helical membrane-spanning segment; that stretch reads LFGYGLALTSVFFQTMYLVLV. Topologically, residues 176–186 are cytoplasmic; that stretch reads EKSGAEDGLSS. A helical transmembrane segment spans residues 187 to 207; sequence IEIMFYNSFLSLPFLSILIIV. Over 208–226 the chain is Lumenal; the sequence is TGEFPNSLSLLLAKCSYLP. The chain crosses the membrane as a helical span at residues 227–247; the sequence is FLVILILSLVMGIVLNFTMFL. Over 248 to 252 the chain is Cytoplasmic; sequence CTIVN. The chain crosses the membrane as a helical span at residues 253-275; that stretch reads SALTTTIVGVLKGVGSTTLGFVL. Topologically, residues 276-278 are lumenal; the sequence is LGG. The helical transmembrane segment at 279 to 301 threads the bilayer; sequence VEVHALNVSGLVVNTAGGVWYSY. Over 302–323 the chain is Cytoplasmic; that stretch reads AKYRQKKAKPAKLMSDLEAHKK.

The protein belongs to the TPT transporter family. UGnT (TC 2.A.7.15) subfamily. Widely expressed with highest expression in roots.

Its subcellular location is the golgi apparatus membrane. Nucleotide-sugar transporter that transports UDP-glucose and UDP-galactose. Plays a role in lateral root and root hair development. The polypeptide is UDP-galactose/UDP-glucose transporter 7 (Arabidopsis thaliana (Mouse-ear cress)).